The following is a 254-amino-acid chain: Type III pantothenate kinase (254 aa).

Position 7-14 (7-14) interacts with ATP; the sequence is DIGNTRLK. Substrate contacts are provided by residues Tyr97 and 104-107; that span reads GSDR. Residue Asp106 is the Proton acceptor of the active site. Residue Thr134 participates in ATP binding. Thr184 is a binding site for substrate.

It belongs to the type III pantothenate kinase family. In terms of assembly, homodimer. It depends on NH4(+) as a cofactor. The cofactor is K(+).

The protein resides in the cytoplasm. It catalyses the reaction (R)-pantothenate + ATP = (R)-4'-phosphopantothenate + ADP + H(+). It functions in the pathway cofactor biosynthesis; coenzyme A biosynthesis; CoA from (R)-pantothenate: step 1/5. In terms of biological role, catalyzes the phosphorylation of pantothenate (Pan), the first step in CoA biosynthesis. The protein is Type III pantothenate kinase of Methylibium petroleiphilum (strain ATCC BAA-1232 / LMG 22953 / PM1).